The sequence spans 272 residues: Streptomycin 3''-kinase (272 aa).

Asp190 serves as the catalytic Proton acceptor.

Belongs to the aminoglycoside phosphotransferase family.

The enzyme catalyses streptomycin + ATP = streptomycin 3''-phosphate + ADP + H(+). Its function is as follows. The aminoglycoside phosphotransferases achieve inactivation of their antibiotic substrates by phosphorylation. The polypeptide is Streptomycin 3''-kinase (aphE) (Streptomyces griseus).